Consider the following 299-residue polypeptide: Oxygen-dependent coproporphyrinogen-III oxidase (299 aa).

Residue S92 participates in substrate binding. Residues H96 and H106 each coordinate a divalent metal cation. H106 functions as the Proton donor in the catalytic mechanism. 108–110 contributes to the substrate binding site; the sequence is NVR. 2 residues coordinate a divalent metal cation: H145 and H175. Residues 240-275 are important for dimerization; that stretch reads YVEFNLVWDRGTLFGLQTGGRTESILMSMPPLVRWE. 258-260 lines the substrate pocket; the sequence is GGR.

Belongs to the aerobic coproporphyrinogen-III oxidase family. In terms of assembly, homodimer. Requires a divalent metal cation as cofactor.

It localises to the cytoplasm. It carries out the reaction coproporphyrinogen III + O2 + 2 H(+) = protoporphyrinogen IX + 2 CO2 + 2 H2O. Its pathway is porphyrin-containing compound metabolism; protoporphyrin-IX biosynthesis; protoporphyrinogen-IX from coproporphyrinogen-III (O2 route): step 1/1. Functionally, involved in the heme biosynthesis. Catalyzes the aerobic oxidative decarboxylation of propionate groups of rings A and B of coproporphyrinogen-III to yield the vinyl groups in protoporphyrinogen-IX. The sequence is that of Oxygen-dependent coproporphyrinogen-III oxidase from Shigella dysenteriae serotype 1 (strain Sd197).